Reading from the N-terminus, the 235-residue chain is RNA pyrophosphohydrolase (235 aa).

Residues 6–149 (GFRPNVGIIL…KREVYQLALS (144 aa)) enclose the Nudix hydrolase domain. Residues 38–59 (GGIKYGETPEQAMFRELHEEVG) carry the Nudix box motif. Residues 161 to 235 (APLSPYGRGG…PDDTAPKDNS (75 aa)) form a disordered region. A compositionally biased stretch (basic and acidic residues) spans 171–196 (QHRERDGRDARDSRERSSDQGGRNEQ). Residues 203 to 220 (TVTTTTVIVETVSVSAPT) are compositionally biased toward low complexity.

This sequence belongs to the Nudix hydrolase family. RppH subfamily. A divalent metal cation serves as cofactor.

In terms of biological role, accelerates the degradation of transcripts by removing pyrophosphate from the 5'-end of triphosphorylated RNA, leading to a more labile monophosphorylated state that can stimulate subsequent ribonuclease cleavage. The chain is RNA pyrophosphohydrolase from Ralstonia pickettii (strain 12J).